The primary structure comprises 146 residues: Putative calcium-binding protein CML19 (146 aa).

4 consecutive EF-hand domains span residues 3 to 38 (AATA…ALGE), 40 to 75 (MSAE…LEMG), 79 to 114 (ERCR…LGSH), and 115 to 146 (QGIE…MMDA). Residues D16, D18, D20, K22, E27, D53, D55, D57, and E64 each coordinate Ca(2+). 4 residues coordinate Ca(2+): D128, D130, D132, and E139.

Its function is as follows. Potential calcium sensor. The polypeptide is Putative calcium-binding protein CML19 (CML19) (Oryza sativa subsp. japonica (Rice)).